We begin with the raw amino-acid sequence, 399 residues long: Argininosuccinate synthase (399 aa).

9–17 (AYSGGLDTS) is a binding site for ATP. L-citrulline is bound at residue tyrosine 85. Glycine 115 contributes to the ATP binding site. Residues threonine 117, asparagine 121, and aspartate 122 each coordinate L-aspartate. Asparagine 121 is a binding site for L-citrulline. L-citrulline contacts are provided by arginine 125, serine 173, glutamate 258, and tyrosine 270.

The protein belongs to the argininosuccinate synthase family. Type 1 subfamily. Homotetramer.

Its subcellular location is the cytoplasm. It catalyses the reaction L-citrulline + L-aspartate + ATP = 2-(N(omega)-L-arginino)succinate + AMP + diphosphate + H(+). It participates in amino-acid biosynthesis; L-arginine biosynthesis; L-arginine from L-ornithine and carbamoyl phosphate: step 2/3. This chain is Argininosuccinate synthase, found in Streptococcus thermophilus (strain CNRZ 1066).